A 213-amino-acid polypeptide reads, in one-letter code: Riboflavin/roseoflavin transporter RibM (213 aa).

5 consecutive transmembrane segments (helical) span residues 15-35 (HIIWSDMVGNILGLITLALGF), 38-58 (SLWTWPVQFLSGLVLFGAFYG), 107-129 (IAAAAVGTVAVALLFKAYPSLSW), 136-158 (YIFVGTIVAMYAQARGMVEFWFA), and 171-193 (FANGYAFSGFVYVIYGALVLWGM).

This sequence belongs to the nicotinamide ribonucleoside (NR) uptake permease (TC 4.B.1) family.

It localises to the cell membrane. Functionally, transports riboflavin and roseoflavin. Can also transport FMN and FAD. May confer roseoflavin resistance to S.davawensis, which naturally produces this antibiotic during stationary growth phase. The chain is Riboflavin/roseoflavin transporter RibM from Streptomyces davaonensis (strain DSM 101723 / JCM 4913 / KCC S-0913 / 768).